The chain runs to 374 residues: tRNA-specific 2-thiouridylase MnmA (374 aa).

ATP is bound by residues 10–17 (AMSGGVDS) and L36. Residue C111 is the Nucleophile of the active site. Cysteines 111 and 209 form a disulfide. G135 lines the ATP pocket. The segment at 159-161 (KDQ) is interaction with tRNA. Catalysis depends on C209, which acts as the Cysteine persulfide intermediate.

The protein belongs to the MnmA/TRMU family.

The protein localises to the cytoplasm. It catalyses the reaction S-sulfanyl-L-cysteinyl-[protein] + uridine(34) in tRNA + AH2 + ATP = 2-thiouridine(34) in tRNA + L-cysteinyl-[protein] + A + AMP + diphosphate + H(+). Its function is as follows. Catalyzes the 2-thiolation of uridine at the wobble position (U34) of tRNA, leading to the formation of s(2)U34. This is tRNA-specific 2-thiouridylase MnmA from Acidobacterium capsulatum (strain ATCC 51196 / DSM 11244 / BCRC 80197 / JCM 7670 / NBRC 15755 / NCIMB 13165 / 161).